A 1430-amino-acid polypeptide reads, in one-letter code: rRNA biogenesis protein RRP5 (1430 aa).

S1 motif domains are found at residues Asp-74–Lys-160, Gly-176–Val-238, Gly-261–Asn-329, Gly-447–Arg-511, Gly-531–Pro-592, and Gln-697–Lys-771. A disordered region spans residues Lys-1041–Lys-1145. Positions Thr-1043–Thr-1053 are enriched in polar residues. 2 stretches are compositionally biased toward basic and acidic residues: residues Val-1057–Thr-1082 and Ser-1135–Lys-1145. The stretch at Leu-1119–Asn-1157 forms a coiled coil. HAT repeat units follow at residues Lys-1161 to Ser-1193, Thr-1195 to Val-1232, Lys-1265 to Trp-1297, Gly-1299 to Lys-1333, Asp-1335 to Lys-1367, and Gly-1369 to Asn-1404.

The protein localises to the nucleus. The protein resides in the nucleolus. In terms of biological role, involved in rRNA processing or maturation during ribosome biogenesis. The polypeptide is rRNA biogenesis protein RRP5 (Drosophila melanogaster (Fruit fly)).